Consider the following 101-residue polypeptide: MFVKKGDKVRVIAGKDKGTEAVVLKALPKVNKVIVEGVGMIKKHQKPNTENPQGAIVEKEAPIHVSNVQVLDKNGVAGRIGYKVVDGKKVRYSKKSGEVLD.

The protein belongs to the universal ribosomal protein uL24 family. Part of the 50S ribosomal subunit.

Its function is as follows. One of two assembly initiator proteins, it binds directly to the 5'-end of the 23S rRNA, where it nucleates assembly of the 50S subunit. One of the proteins that surrounds the polypeptide exit tunnel on the outside of the subunit. This Streptococcus pyogenes serotype M1 protein is Large ribosomal subunit protein uL24.